Reading from the N-terminus, the 444-residue chain is Deoxyguanosinetriphosphate triphosphohydrolase-like protein (444 aa).

Residues 59–250 (RLTHSLEVSQ…MELADDIAYA (192 aa)) form the HD domain.

This sequence belongs to the dGTPase family. Type 2 subfamily.

The polypeptide is Deoxyguanosinetriphosphate triphosphohydrolase-like protein (Shewanella halifaxensis (strain HAW-EB4)).